The sequence spans 462 residues: Integrator complex subunit 12 (462 aa).

The interval 42 to 132 (GIDSSYRPSQ…PETQSSPITV (91 aa)) is disordered. Residues 59 to 86 (ISSTKNISIKQEPKISSSLPSGNNNGKV) show a composition bias toward polar residues. K68 participates in a covalent cross-link: Glycyl lysine isopeptide (Lys-Gly) (interchain with G-Cter in SUMO2). Over residues 88 to 124 (TTEKVKKEAEKRPADKMKSDITEGVDIPKKPRLEKPE) the composition is skewed to basic and acidic residues. A Phosphoserine modification is found at S128. A PHD-type zinc finger spans residues 159–215 (GLACVVCRQMMVASGNQLVECQECHNLYHRDCHKPQVTDKEANDPRLVWYCARCTRQ). K254 is covalently cross-linked (Glycyl lysine isopeptide (Lys-Gly) (interchain with G-Cter in SUMO2)). The segment covering 301–328 (SSAGPSTAKLSSTTQNNTGKPATSSANQ) has biased composition (polar residues). Residues 301–462 (SSAGPSTAKL…KKAAQKKLKK (162 aa)) form a disordered region. Low complexity-rich tracts occupy residues 347–358 (KIGSNNSTTPTV) and 382–437 (VSKV…GPTS). Basic residues predominate over residues 449–462 (QMVKKKAAQKKLKK).

The protein belongs to the Integrator subunit 12 family. Component of the Integrator complex, composed of core subunits INTS1, INTS2, INTS3, INTS4, INTS5, INTS6, INTS7, INTS8, INTS9/RC74, INTS10, INTS11/CPSF3L, INTS12, INTS13, INTS14 and INTS15. The core complex associates with protein phosphatase 2A subunits PPP2CA and PPP2R1A, to form the Integrator-PP2A (INTAC) complex. In terms of processing, dephosphorylated at Ser-128 by the PNUTS-PP1 complex, promoting RNA polymerase II transcription pause-release.

The protein localises to the nucleus. Component of the integrator complex, a multiprotein complex that terminates RNA polymerase II (Pol II) transcription in the promoter-proximal region of genes. The integrator complex provides a quality checkpoint during transcription elongation by driving premature transcription termination of transcripts that are unfavorably configured for transcriptional elongation: the complex terminates transcription by (1) catalyzing dephosphorylation of the C-terminal domain (CTD) of Pol II subunit POLR2A/RPB1 and SUPT5H/SPT5, (2) degrading the exiting nascent RNA transcript via endonuclease activity and (3) promoting the release of Pol II from bound DNA. The integrator complex is also involved in terminating the synthesis of non-coding Pol II transcripts, such as enhancer RNAs (eRNAs), small nuclear RNAs (snRNAs), telomerase RNAs and long non-coding RNAs (lncRNAs). Mediates recruitment of cytoplasmic dynein to the nuclear envelope, probably as component of the integrator complex. This Homo sapiens (Human) protein is Integrator complex subunit 12.